We begin with the raw amino-acid sequence, 905 residues long: Lateral signaling target protein 2 homolog (905 aa).

K87 participates in a covalent cross-link: Glycyl lysine isopeptide (Lys-Gly) (interchain with G-Cter in ubiquitin). A Phosphoserine modification is found at S334. The tract at residues 354–441 (DEMSSLLSPP…RGQDGQSGEV (88 aa)) is disordered. Polar residues-rich tracts occupy residues 358–367 (SLLSPPSACQ) and 418–437 (PGNT…QDGQ). A Phosphothreonine modification is found at T512. Disordered stretches follow at residues 516–552 (NPKS…DNSH) and 589–691 (PGSV…RGDV). Basic and acidic residues-rich tracts occupy residues 542-552 (PRAEGTGDNSH) and 605-615 (GGDKEPERIDE). Residues 647–656 (SGPQVDTASR) show a composition bias toward polar residues. The segment covering 659-678 (GEGEVKGQPEPEARKQDPEK) has biased composition (basic and acidic residues). Residues 835–895 (DEACGFCTSC…VCTHCYMFHV (61 aa)) form an FYVE-type zinc finger. Zn(2+)-binding residues include C841, C844, C857, C860, C865, C868, and C887. T888 carries the post-translational modification Phosphothreonine; by MAP2K. C890 contacts Zn(2+).

The protein belongs to the lst-2 family. Interacts with TRIM3. Post-translationally, monoubiquitination at Lys-87 prevents binding to phosphatidylinositol 3-phosphate (PI3P) and localization to early endosome membranes. Enriched in brain (at protein level).

It localises to the cytoplasm. The protein resides in the cytosol. Its subcellular location is the early endosome membrane. Functionally, negative regulator of epidermal growth factor receptor (EGFR) signaling. Acts by promoting EGFR degradation in endosomes when not monoubiquitinated. The polypeptide is Lateral signaling target protein 2 homolog (Zfyve28) (Mus musculus (Mouse)).